The primary structure comprises 113 residues: Endoribonuclease SymE (113 aa).

The region spanning 29–74 (SRYPDYSRIPAITLKGQWLEAAGFATGTAVVVKVMEGCIVLTAQPA) is the SpoVT-AbrB domain.

Belongs to the SymE family.

It localises to the cytoplasm. Its function is as follows. Involved in the degradation and recycling of damaged RNA. It is itself a target for degradation by the ATP-dependent protease Lon. This Escherichia coli (strain ATCC 8739 / DSM 1576 / NBRC 3972 / NCIMB 8545 / WDCM 00012 / Crooks) protein is Endoribonuclease SymE.